We begin with the raw amino-acid sequence, 580 residues long: Arginine--tRNA ligase (580 aa).

The 'HIGH' region signature appears at 131–141; that stretch reads ANPTGPMHVGH.

This sequence belongs to the class-I aminoacyl-tRNA synthetase family. As to quaternary structure, monomer.

The protein localises to the cytoplasm. It catalyses the reaction tRNA(Arg) + L-arginine + ATP = L-arginyl-tRNA(Arg) + AMP + diphosphate. The sequence is that of Arginine--tRNA ligase from Cereibacter sphaeroides (strain ATCC 17029 / ATH 2.4.9) (Rhodobacter sphaeroides).